Reading from the N-terminus, the 445-residue chain is GTPase Der (445 aa).

EngA-type G domains follow at residues Pro3–Gln167 and Val180–Met353. Residues Gly9 to Ser16, Asp56 to Phe60, Asn119 to Glu122, Gly186 to Ser193, Asp233 to Leu237, and Asn298 to Asp301 each bind GTP. The KH-like domain occupies Ala354–Thr438.

It belongs to the TRAFAC class TrmE-Era-EngA-EngB-Septin-like GTPase superfamily. EngA (Der) GTPase family. Associates with the 50S ribosomal subunit.

Functionally, GTPase that plays an essential role in the late steps of ribosome biogenesis. The polypeptide is GTPase Der (Paraburkholderia phytofirmans (strain DSM 17436 / LMG 22146 / PsJN) (Burkholderia phytofirmans)).